We begin with the raw amino-acid sequence, 128 residues long: UPF0102 protein KPN78578_35270 (128 aa).

The segment at 1–20 (MAQVPAGKNRSGQLSKQTGD) is disordered.

It belongs to the UPF0102 family.

The polypeptide is UPF0102 protein KPN78578_35270 (Klebsiella pneumoniae subsp. pneumoniae (strain ATCC 700721 / MGH 78578)).